The following is a 169-amino-acid chain: Histone H1.9 (169 aa).

2 stretches are compositionally biased toward polar residues: residues 1 to 10 (MSLVSPSPDS) and 19 to 36 (DAST…IGPN). The interval 1–36 (MSLVSPSPDSNAVMAGDQDASTSQVPSQSESKIGPN) is disordered. In terms of domain architecture, H15 spans 43–116 (RKPTMSKVIL…GASGSFRLGK (74 aa)). 2 positions are modified to phosphoserine: S62 and S65. Over residues 118–142 (QAFKSKCKAKRRQRRQKPGQRRTGS) the composition is skewed to basic residues. The segment at 118–154 (QAFKSKCKAKRRQRRQKPGQRRTGSRRSLLGSKKSNN) is disordered.

It belongs to the histone H1/H5 family.

It localises to the nucleus. It is found in the chromosome. In terms of biological role, DNA-binding protein that may be implicated in chromatin remodeling and/or transcriptional regulation during spermiogenesis, the process of spermatid maturation into spermatozoa. The protein is Histone H1.9 of Rattus norvegicus (Rat).